A 253-amino-acid chain; its full sequence is 2,3-bisphosphoglycerate-dependent phosphoglycerate mutase (253 aa).

Substrate is bound by residues 12–19, 25–26, Arg-64, 91–94, Lys-102, and 118–119; these read RHGESEWN, TG, ERHY, and RR. The active-site Tele-phosphohistidine intermediate is the His-13. Glu-91 acts as the Proton donor/acceptor in catalysis. The disordered stretch occupies residues 126 to 148; the sequence is PPLADGSEFSQSDDPRYASIPPE. Residue 187–188 coordinates substrate; sequence GN.

The protein belongs to the phosphoglycerate mutase family. BPG-dependent PGAM subfamily.

The enzyme catalyses (2R)-2-phosphoglycerate = (2R)-3-phosphoglycerate. The protein operates within carbohydrate degradation; glycolysis; pyruvate from D-glyceraldehyde 3-phosphate: step 3/5. In terms of biological role, catalyzes the interconversion of 2-phosphoglycerate and 3-phosphoglycerate. In Streptomyces avermitilis (strain ATCC 31267 / DSM 46492 / JCM 5070 / NBRC 14893 / NCIMB 12804 / NRRL 8165 / MA-4680), this protein is 2,3-bisphosphoglycerate-dependent phosphoglycerate mutase.